A 510-amino-acid polypeptide reads, in one-letter code: Cytochrome P450 monooxygenase macH (510 aa).

A helical membrane pass occupies residues 7 to 29 (LPVSLWLIAAGTFAVYHAIRAVY). Cys454 serves as a coordination point for heme.

It belongs to the cytochrome P450 family. The cofactor is heme.

It localises to the membrane. The protein operates within secondary metabolite biosynthesis; terpenoid biosynthesis. Cytochrome P450 monooxygenase; part of the gene cluster that mediates the biosynthesis of macrophorins, isoprenoid epoxycyclohexenones containing cyclized drimane moieties. The first step of the pathway is the synthesis of 6-methylsalicylic acid (6-MSA) by the polyketide synthase macA. 6-MSA is then converted to m-cresol by the decarboxylase macB. The cytochrome P450 monooxygenase macC then catalyzes the oxidation of m-cresol to toluquinol. Epoxidation of toluquinol is then performed by the short chain dehydrogenase macD, with the help of macE, and a further prenylation by macG leads to 7-deacetoxyyanuthone A. The next step is the hydroxylation of C-22 of 7-deacetoxyyanuthone A by the cytochrome P450 monooxygenase macH to yield 22-deacetylyanuthone A. O-Mevalon transferase macI then attaches mevalon to the hydroxyl group of 22-deacetylyanuthone A to produce yanuthone E. The terpene cyclase macJ catalyzes the cyclization of 22-deacetylyanuthone A to macrophorin A. MacJ is also able to catalyze cyclization of yanuthone E and 7-deacetoxyyanuthone A to their corresponding macrophorins. The macJ products can be further modified by macH and macJ, as well as by the FAD-dependent monooxygenase macF, to produce additional macrophorins, including 4'-oxomacrophorin A, 4'-oxomacrophorin D and 4'-oxomacrophorin E. The polypeptide is Cytochrome P450 monooxygenase macH (Penicillium terrestre).